We begin with the raw amino-acid sequence, 72 residues long: Toxin Cll8 (72 aa).

The first 4 residues, 1–4, serve as a signal peptide directing secretion; the sequence is TVSA. Positions 5–70 constitute an LCN-type CS-alpha/beta domain; it reads KEGYLVKKSN…TWPLPNKSCG (66 aa). Disulfide bonds link Cys16-Cys69, Cys20-Cys45, Cys29-Cys50, and Cys33-Cys52. A Cysteine amide modification is found at Cys69.

This sequence belongs to the long (4 C-C) scorpion toxin superfamily. Sodium channel inhibitor family. Beta subfamily. In terms of tissue distribution, expressed by the venom gland.

Its subcellular location is the secreted. Functionally, beta toxins bind voltage-independently at site-4 of sodium channels (Nav) and shift the voltage of activation toward more negative potentials thereby affecting sodium channel activation and promoting spontaneous and repetitive firing. The sequence is that of Toxin Cll8 from Centruroides limpidus (Mexican scorpion).